A 232-amino-acid chain; its full sequence is Dehydrogenase OXI1 (232 aa).

Residues 1–20 (MTETFKVAITFVSPSSEALA) form the signal peptide. L19 contacts NADP(+). Residue N28 is glycosylated (N-linked (GlcNAc...) asparagine). Positions 42, 70, and 103 each coordinate NADP(+). An N-linked (GlcNAc...) asparagine glycan is attached at N117. Active-site proton donor residues include S119 and S121. NADP(+) contacts are provided by Y133, K137, and T168. The active-site Proton acceptor is Y133. K137 (lowers pKa of active site Tyr) is an active-site residue.

This sequence belongs to the short-chain dehydrogenases/reductases (SDR) family.

It carries out the reaction a primary alcohol + NAD(+) = an aldehyde + NADH + H(+). It catalyses the reaction a secondary alcohol + NAD(+) = a ketone + NADH + H(+). The protein operates within mycotoxin biosynthesis. Functionally, dehydrogenase; part of the Tox1A locus, one of the 2 loci that mediate the biosynthesis of T-toxin, a family of linear polyketides 37 to 45 carbons in length, of which the major component is 41 carbons, and which leads to high virulence to maize. One of the PKSs (PKS1 or PKS2) could synthesize a precursor, used subsequently by the other PKS as starter unit, to add additional carbons. Variability in the length of the final carbon backbone C35-47 could be achieved by varying the number of condensation cycles, or use of different starter or extender units or might be due to decarboxylation of the penultimate product, catalyzed by DEC1. Additional proteins are required for the biosynthesis of T-toxin, including oxidoreductases RED1, RED2, RED3, LAM1 and OXI1, as well as esterase TOX9. This Cochliobolus heterostrophus (strain C4 / ATCC 48331 / race T) (Southern corn leaf blight fungus) protein is Dehydrogenase OXI1.